Reading from the N-terminus, the 367-residue chain is Quinolinate synthase (367 aa).

Iminosuccinate contacts are provided by histidine 45 and serine 62. Cysteine 109 is a [4Fe-4S] cluster binding site. Iminosuccinate-binding positions include 140–142 (YVN) and serine 161. Position 229 (cysteine 229) interacts with [4Fe-4S] cluster. Iminosuccinate contacts are provided by residues 255 to 257 (HPE) and threonine 272. Position 319 (cysteine 319) interacts with [4Fe-4S] cluster.

This sequence belongs to the quinolinate synthase family. Type 3 subfamily. [4Fe-4S] cluster is required as a cofactor.

It localises to the cytoplasm. The catalysed reaction is iminosuccinate + dihydroxyacetone phosphate = quinolinate + phosphate + 2 H2O + H(+). Its pathway is cofactor biosynthesis; NAD(+) biosynthesis; quinolinate from iminoaspartate: step 1/1. In terms of biological role, catalyzes the condensation of iminoaspartate with dihydroxyacetone phosphate to form quinolinate. This chain is Quinolinate synthase, found in Halalkalibacterium halodurans (strain ATCC BAA-125 / DSM 18197 / FERM 7344 / JCM 9153 / C-125) (Bacillus halodurans).